A 627-amino-acid polypeptide reads, in one-letter code: MSATQKNNITRLEQLDRQSTQPFPNSRKVYLTGSRPDIRVPVREISLADTPTAFGGEKNPPVFVYDTSGPYTDPEVRIDLRKGLPDVRSRWIDERGDTEILPGLTSEFGQARLADASLDALRFAHVRTPRRAKPGANVSQMHYAKKGIITPEMEYIAIRENMKLQEARAAGLLDQQHPGHSFGANIPKEITPEFVREEVARGRAIIPANINHTELEPMIIGRNFLVKINGNIGNSALGSSIEEEVEKLTWGIRWGADTVMDLSTGKHIHETREWILRNSPVPIGTVPIYQALEKVNGVAEDLTWEIFRDTLIEQAEQGVDYFTIHAGVLLRYVPLTAKRVTGIVSRGGSIMAKWCLAHHKENFLYTHFEEICEIMKAYDVSFSLGDGLRPGSVADANDAAQFGELETLGELTKIAWKHDVQVMIEGPGHVPMQLIKENMDKQLECCDEAPFYTLGPLTTDIAPGYDHITSGIGAAMIGWFGCAMLCYVTPKEHLGLPNKDDVKTGIITYKIAAHAADLAKGHPGAQIRDNALSKARFEFRWEDQFNLGLDPDTARAFHDETLPKDSAKVAHFCSMCGPKFCSMKITQEVRDYAKENGLSDESKAIEAGFQEQAARFKDEGSVIYKQV.

Residues 1–24 are compositionally biased toward polar residues; that stretch reads MSATQKNNITRLEQLDRQSTQPFP. Residues 1–29 are disordered; it reads MSATQKNNITRLEQLDRQSTQPFPNSRKV. Residues N231, M260, Y289, H325, 345-347, 386-389, and E425 each bind substrate; these read SRG and DGLR. Zn(2+) is bound at residue H429. Y452 is a binding site for substrate. H493 contacts Zn(2+). Residues C573, C576, and C581 each contribute to the [4Fe-4S] cluster site.

Belongs to the ThiC family. Homodimer. Requires [4Fe-4S] cluster as cofactor.

It catalyses the reaction 5-amino-1-(5-phospho-beta-D-ribosyl)imidazole + S-adenosyl-L-methionine = 4-amino-2-methyl-5-(phosphooxymethyl)pyrimidine + CO + 5'-deoxyadenosine + formate + L-methionine + 3 H(+). It participates in cofactor biosynthesis; thiamine diphosphate biosynthesis. In terms of biological role, catalyzes the synthesis of the hydroxymethylpyrimidine phosphate (HMP-P) moiety of thiamine from aminoimidazole ribotide (AIR) in a radical S-adenosyl-L-methionine (SAM)-dependent reaction. This is Phosphomethylpyrimidine synthase from Pseudomonas paraeruginosa (strain DSM 24068 / PA7) (Pseudomonas aeruginosa (strain PA7)).